Consider the following 38-residue polypeptide: Large ribosomal subunit protein bL36 (38 aa).

Belongs to the bacterial ribosomal protein bL36 family.

The polypeptide is Large ribosomal subunit protein bL36 (Myxococcus xanthus (strain DK1622)).